The following is a 61-amino-acid chain: Adipokinetic prohormone type 2 (61 aa).

A signal peptide spans 1–22; sequence MRQGCALTLMLLVVVCAALSAA. Gln23 is modified (pyrrolidone carboxylic acid). Position 30 is a tryptophan amide (Trp30).

The protein belongs to the AKH/HRTH/RPCH family. As to quaternary structure, adipokinetic hormone precursor-related peptide (APRP) can form three type of disulfide-bond dimers: p1 (alpha-alpha), p2 (alpha-beta), and p3 (beta-beta).

It is found in the secreted. Its function is as follows. This hormone, released from cells in the corpora cardiaca, causes release of diglycerides from the fat body and stimulation of muscles to use these diglycerides as an energy source during energy-demanding processes. This is Adipokinetic prohormone type 2 from Schistocerca nitens (Vagrant locust).